Reading from the N-terminus, the 528-residue chain is uncharacterized protein (528 aa).

Positions 1-51 (MEHPKRPTPKNEALHIDASGRGESSFSVHRSHSGGHEPFAPSPGSSIGASV) are disordered. 2 tandem repeats follow at residues 185–213 (EQEE…VKKY) and 285–313 (EQEQ…QQAL). The 2 X 29 AA repeats stretch occupies residues 185–313 (EQEEEYISNS…EEKRKLQQAL (129 aa)). Disordered regions lie at residues 467–497 (RAHG…NNDT) and 509–528 (TVHP…DSHY). Over residues 472-496 (SPPTVVVQPSTSRAGSNSTANINND) the composition is skewed to polar residues.

This is an uncharacterized protein from Caenorhabditis elegans.